A 384-amino-acid polypeptide reads, in one-letter code: Ubiquitin-like modifier-activating enzyme 5 (384 aa).

Residues G63, D84, K107, N130, and N164 each coordinate ATP. C206 and C209 together coordinate Zn(2+). C230 functions as the Glycyl thioester intermediate in the catalytic mechanism. 2 residues coordinate Zn(2+): C283 and C288. Residues 352–375 form a disordered region; it reads EAPEKSSAEATQAATAPVDDTSLE.

This sequence belongs to the ubiquitin-activating E1 family. UBA5 subfamily.

Functionally, E1-like enzyme which activates UFM1. In Drosophila persimilis (Fruit fly), this protein is Ubiquitin-like modifier-activating enzyme 5.